We begin with the raw amino-acid sequence, 146 residues long: Hemoglobin subunit beta (146 aa).

Position 1 is an N-acetylvaline (V1). In terms of domain architecture, Globin spans 2-146 (HLSGEEKAAV…VANALAHKYH (145 aa)). Residue T12 is modified to Phosphothreonine. S44 bears the Phosphoserine mark. Residue K59 is modified to N6-acetyllysine. H63 is a heme b binding site. The residue at position 82 (K82) is an N6-acetyllysine. H92 is a binding site for heme b. Position 93 is an S-nitrosocysteine (C93). K144 is modified (N6-acetyllysine).

This sequence belongs to the globin family. As to quaternary structure, heterotetramer of two alpha chains and two beta chains. In terms of tissue distribution, red blood cells.

Its function is as follows. Involved in oxygen transport from the lung to the various peripheral tissues. The polypeptide is Hemoglobin subunit beta (HBB) (Pteropus alecto (Black flying fox)).